Here is a 161-residue protein sequence, read N- to C-terminus: MSEISTALSLENCPCQSSHHYADCCGKFHLRQAFPETAEQLMRSRYTAYVLKNIPYIVVTTVPSQQTLLKPRLLQEWADNTTWLGLEILKTESLTKTQSAVEFKAIFQGEECEQAHQERSIFVKIEDRWYFVDPTVSLPTMKQPCVCGSGKKFKHCCGGFL.

Belongs to the UPF0225 family.

This chain is UPF0225 protein HI_0277, found in Haemophilus influenzae (strain ATCC 51907 / DSM 11121 / KW20 / Rd).